A 670-amino-acid polypeptide reads, in one-letter code: Nitrate import ATP-binding protein NrtC (670 aa).

One can recognise an ABC transporter domain in the interval 5-239 (IEIDHVDRIF…RPRHRLEVVN (235 aa)). 42-49 (GHSGCGKS) contributes to the ATP binding site. Residues 255–278 (NQQKRAKKVGAVSQFAEAMGGNGL) are linker. The interval 279–670 (EKINLDLGFI…LIDQIDQVNQ (392 aa)) is nrtA-like.

The protein belongs to the ABC transporter superfamily. Nitrate/nitrite/cyanate uptake transporter (NitT) (TC 3.A.1.16) family. As to quaternary structure, the complex is composed of two ATP-binding proteins (NrtC and NrtD), two transmembrane proteins (NrtB) and a solute-binding protein (NrtA).

It is found in the cell inner membrane. The catalysed reaction is nitrate(out) + ATP + H2O = nitrate(in) + ADP + phosphate + H(+). Functionally, part of the ABC transporter complex NrtABCD involved in nitrate uptake. The complex is probably also involved in nitrite transport. Probably responsible for energy coupling to the transport system. In Synechocystis sp. (strain ATCC 27184 / PCC 6803 / Kazusa), this protein is Nitrate import ATP-binding protein NrtC (nrtC).